The following is an 899-amino-acid chain: Translation initiation factor IF-2 (899 aa).

Disordered regions lie at residues 94–167 (TFTK…VVVK) and 259–309 (FNQE…HGFE). Residues 107-121 (AKARQETEERTRPQE) are compositionally biased toward basic and acidic residues. The segment covering 147–164 (RAAQQKETAKTTSTTTEV) has biased composition (low complexity). A tr-type G domain is found at 399–568 (TRPPVVTIMG…LIQSELMELK (170 aa)). Positions 408 to 415 (GHVDHGKT) are G1. 408–415 (GHVDHGKT) contacts GTP. Residues 433 to 437 (GITQH) form a G2 region. The G3 stretch occupies residues 454–457 (DTPG). GTP is bound by residues 454–458 (DTPGH) and 508–511 (NKMD). The tract at residues 508–511 (NKMD) is G4. The tract at residues 544–546 (SAH) is G5.

This sequence belongs to the TRAFAC class translation factor GTPase superfamily. Classic translation factor GTPase family. IF-2 subfamily.

It localises to the cytoplasm. One of the essential components for the initiation of protein synthesis. Protects formylmethionyl-tRNA from spontaneous hydrolysis and promotes its binding to the 30S ribosomal subunits. Also involved in the hydrolysis of GTP during the formation of the 70S ribosomal complex. This is Translation initiation factor IF-2 from Acinetobacter baylyi (strain ATCC 33305 / BD413 / ADP1).